The primary structure comprises 356 residues: Myricetin 7/4'-O-methyltransferase 2 (356 aa).

Residue Asp-222 coordinates S-adenosyl-L-methionine. His-260 functions as the Proton acceptor in the catalytic mechanism.

This sequence belongs to the class I-like SAM-binding methyltransferase superfamily. Cation-independent O-methyltransferase family. In terms of assembly, homodimer.

It carries out the reaction quercetin + S-adenosyl-L-methionine = rhamnetin + S-adenosyl-L-homocysteine + H(+). It catalyses the reaction kaempferol + S-adenosyl-L-methionine = kaempferide + S-adenosyl-L-homocysteine + H(+). The enzyme catalyses myricetin + S-adenosyl-L-methionine = 7-O-methylmyricetin + S-adenosyl-L-homocysteine + H(+). The catalysed reaction is kaempferide + S-adenosyl-L-methionine = 7,4'-O-dimethylkaempferol + S-adenosyl-L-homocysteine + H(+). It carries out the reaction isorhamnetin + S-adenosyl-L-methionine = 3',4'-O-dimethylquercetin + S-adenosyl-L-homocysteine + 2 H(+). It catalyses the reaction 3',4',5,7-tetrahydroxy-3-methoxyflavone + S-adenosyl-L-methionine = 3',4',5-trihydroxy-3,7-dimethoxyflavone + S-adenosyl-L-homocysteine + H(+). The enzyme catalyses rhamnetin + S-adenosyl-L-methionine = 7,4'-O-dimethylquercetin + S-adenosyl-L-homocysteine + H(+). The catalysed reaction is syringetin + S-adenosyl-L-methionine = 7,3',5'-O-trimethylmyricetin + S-adenosyl-L-homocysteine + H(+). It carries out the reaction 3',4',5'-O-trimethylmyricetin + S-adenosyl-L-methionine = 7,3',4',5'-O-tetramethylmyricetin + S-adenosyl-L-homocysteine. The protein operates within flavonoid metabolism. Its function is as follows. Flavonoid 7/4'-O-methyltransferase involved in the biosynthesis of polymethoxylated flavonoids natural products such as myricetin derivatives, aroma compounds possessing antioxidant properties and exhibiting pharmacological activities such as anti-carcinogen, anti-viral, anti-thrombotic, anti-diabetic, anti-atherosclerotic, and anti-inflammatory effects. Catalyzes S-adenosylmethionine-dependent regioselective 7/4'-O-methylation of flavonoids; active on various hydroxylated flavonoid substrates. The chain is Myricetin 7/4'-O-methyltransferase 2 from Solanum lycopersicum (Tomato).